The primary structure comprises 211 residues: Metalloproteinase inhibitor 3 (211 aa).

An N-terminal signal peptide occupies residues 1-23 (MTPWLGLVVLLSCWSLGHWGTEA). C24 is a Zn(2+) binding site. Involved in metalloproteinase-binding stretches follow at residues 24-27 (CTCS) and 88-89 (ES). Cystine bridges form between C24/C91, C26/C118, C36/C143, C145/C192, C150/C155, and C163/C184. An NTR domain is found at 24-143 (CTCSPSHPQD…GLNYRYHLGC (120 aa)). Residues 105 to 188 (TGRVYEGKMY…SKHYACIRQK (84 aa)) are mediates interaction with EFEMP1.

This sequence belongs to the protease inhibitor I35 (TIMP) family. As to quaternary structure, interacts with EFEMP1. Interacts with KDR.

Its subcellular location is the secreted. The protein localises to the extracellular space. It localises to the extracellular matrix. Mediates a variety of processes including matrix regulation and turnover, inflammation, and angiogenesis, through reversible inhibition of zinc protease superfamily enzymes, primarily matrix metalloproteinases (MMPs). Regulates extracellular matrix (ECM) remodeling through inhibition of matrix metalloproteinases (MMP) including MMP-1, MMP-2, MMP-3, MMP-7, MMP-9, MMP-13, MMP-14 and MMP-15. Additionally, modulates the processing of amyloid precursor protein (APP) and apolipoprotein E receptor ApoER2 by inhibiting two alpha-secretases ADAM10 and ADAM17. Functions as a tumor suppressor and a potent inhibitor of angiogenesis. Exerts its anti-angiogenic effect by directly interacting with vascular endothelial growth factor (VEGF) receptor-2/KDR, preventing its binding to the VEGFA ligand. Selectively induces apoptosis in angiogenic endothelial cells through a caspase-independent cell death pathway. Mechanistically, inhibits matrix-induced focal adhesion kinase PTK2 tyrosine phosphorylation and association with paxillin/PXN and disrupts the incorporation of ITGB3, PTK2 and PXN into focal adhesion contacts on the matrix. The polypeptide is Metalloproteinase inhibitor 3 (Timp3) (Rattus norvegicus (Rat)).